The sequence spans 374 residues: 5-aminosalicylate 1,2-dioxygenase (374 aa).

This sequence belongs to the gentisate 1,2-dioxygenase family. Fe(2+) is required as a cofactor.

The enzyme catalyses 5-amino-2-hydroxybenzoate + O2 = (2Z,4E)-4-amino-6-oxohepta-2,4-dienedioate + H(+). Inhibited by SDS and o-phenanthroline, a ferrous iron chelator. Partially inhibited by EDTA. Involved in the biodegradation of 3-aminobenzoate. Catalyzes the cleavage of the 5-aminosalicylate (5ASA) aromatic ring to form 4-amino-6-oxohepta-2,4-dienedioate (cis-ACOHDA). Can also convert gentisate, but the catalytic efficiency with 5ASA is 70-fold higher. This chain is 5-aminosalicylate 1,2-dioxygenase, found in Comamonas sp.